A 258-amino-acid chain; its full sequence is L-aspartate dehydrogenase 1 (258 aa).

NAD(+) contacts are provided by Ala-121 and Asn-181. His-211 is an active-site residue.

It belongs to the L-aspartate dehydrogenase family.

The enzyme catalyses L-aspartate + NADP(+) + H2O = oxaloacetate + NH4(+) + NADPH + H(+). It catalyses the reaction L-aspartate + NAD(+) + H2O = oxaloacetate + NH4(+) + NADH + H(+). It functions in the pathway cofactor biosynthesis; NAD(+) biosynthesis; iminoaspartate from L-aspartate (dehydrogenase route): step 1/1. In terms of biological role, specifically catalyzes the NAD or NADP-dependent dehydrogenation of L-aspartate to iminoaspartate. The polypeptide is L-aspartate dehydrogenase 1 (Bordetella bronchiseptica (strain ATCC BAA-588 / NCTC 13252 / RB50) (Alcaligenes bronchisepticus)).